The sequence spans 225 residues: 7-cyano-7-deazaguanine synthase (225 aa).

10-20 (FSGGQDSTTLA) contacts ATP. Zn(2+) contacts are provided by Cys-190, Cys-205, Cys-208, and Cys-211.

Belongs to the QueC family. It depends on Zn(2+) as a cofactor.

The catalysed reaction is 7-carboxy-7-deazaguanine + NH4(+) + ATP = 7-cyano-7-deazaguanine + ADP + phosphate + H2O + H(+). The protein operates within purine metabolism; 7-cyano-7-deazaguanine biosynthesis. In terms of biological role, catalyzes the ATP-dependent conversion of 7-carboxy-7-deazaguanine (CDG) to 7-cyano-7-deazaguanine (preQ(0)). The polypeptide is 7-cyano-7-deazaguanine synthase (Helicobacter pylori (strain J99 / ATCC 700824) (Campylobacter pylori J99)).